We begin with the raw amino-acid sequence, 942 residues long: MLTSSMPQNLSLFGFSPLKSSSFALILRPFSLYPPIFASSSPAPSRRPPRTAGYRRSGPSPPRRKWSSFEEQKRKGRSPMEKDKAISFNHSSDSFEFNKRRAEGLDKVDKPKKNLKRNTRTLNPTNTIAYVQILGTGMDTQDTSPSVLLFFDKQRFIFNAGEGLQRFCTEHKIKLSKVDHIFLSRVCSETAGGLPGLLLTLAGIGEQGLSVNVWGPSDLKYLVDAMRSFIPRAAMVHTRSFGPSLNISDSAPQIGLSKPKDDAYVLVDDEVVKISAILLEPSRLEESGSKPGETAVIYVCELPEIKGKFDPKKAMALGLRAGPKYSYLQSGQSVKSDFKDITVHPSDVMGPSVPGPVVLLVDCPTESHAEELLSIPSMKTYYSCLDNSTDGAKLVNCIIHLSPASVTNSSTYRSWMKRFHSAQHILAGHEAKNMEFPILRASSRITARLNYLCPQFFPAPGFWSHQHDNNSINPTSLSKCFDSNLGESISAENLLKFTLRPHGNLGVDRSSIPSRLTALRVMDELLSEIPEISSKTEEIKQLWNGQHNKMMIEEPWLGESTVPSCLENIRRDDMEIVLLGTGSSQPSKYRNVTAIYIDLFSRGSILLDCGEGTLGQLKRRYGLEGADEAVRNLRCIWISHIHADHHTGLARILARRRELLKGLAHEPAIVVGPRSLKNFLDAYQRLEDLDMEFLDCRNTTTTSWASVETSRPEKNTSSGNAEGSLFSKGSLMQSIYKRPSSPLTDNSSALPFLKKLKKVLGEMGLEHLISFPVVHCPQAFGVSLKAAERKNIAGDEIPGWKMVYSGDTRPCPEMVEASKGATVLIHEATFEDALVEEAVAKNHSTTKEAIKVGSSAGVYRTVLTHFSQRYPKIPVIDESHMHNTCIAFDMMSINMADLHVLPKILPYFKTLFRNQVVEEEEEEEETDDDSLIRDKVPSFFIN.

The transit peptide at 1-50 (MLTSSMPQNLSLFGFSPLKSSSFALILRPFSLYPPIFASSSPAPSRRPPR) directs the protein to the mitochondrion. The segment at 38–85 (ASSSPAPSRRPPRTAGYRRSGPSPPRRKWSSFEEQKRKGRSPMEKDKA) is disordered. A compositionally biased stretch (basic and acidic residues) spans 67–85 (SSFEEQKRKGRSPMEKDKA).

Belongs to the RNase Z family. As to quaternary structure, homodimer. Zn(2+) is required as a cofactor. It depends on Ca(2+) as a cofactor. The cofactor is Mn(2+). Mg(2+) serves as cofactor.

It localises to the mitochondrion. The catalysed reaction is Endonucleolytic cleavage of RNA, removing extra 3' nucleotides from tRNA precursor, generating 3' termini of tRNAs. A 3'-hydroxy group is left at the tRNA terminus and a 5'-phosphoryl group is left at the trailer molecule.. Its function is as follows. Zinc phosphodiesterase, which displays tRNA 3'-processing endonuclease activity. Involved in tRNA maturation, by removing a 3'-trailer from precursor tRNA. Can process the mitochondrial tRNA-like structures (t-elements). The chain is tRNAse Z TRZ4, mitochondrial from Arabidopsis thaliana (Mouse-ear cress).